The sequence spans 201 residues: Histidine biosynthesis bifunctional protein HisIE (201 aa).

Residues 1–114 (MLTAQQIEKL…FAPAQTEWGF (114 aa)) are phosphoribosyl-AMP cyclohydrolase. Positions 115–201 (LYQLEKLLAS…SCVIRRLRER (87 aa)) are phosphoribosyl-ATP pyrophosphohydrolase.

This sequence in the N-terminal section; belongs to the PRA-CH family. It in the C-terminal section; belongs to the PRA-PH family.

The protein localises to the cytoplasm. The catalysed reaction is 1-(5-phospho-beta-D-ribosyl)-ATP + H2O = 1-(5-phospho-beta-D-ribosyl)-5'-AMP + diphosphate + H(+). It catalyses the reaction 1-(5-phospho-beta-D-ribosyl)-5'-AMP + H2O = 1-(5-phospho-beta-D-ribosyl)-5-[(5-phospho-beta-D-ribosylamino)methylideneamino]imidazole-4-carboxamide. The protein operates within amino-acid biosynthesis; L-histidine biosynthesis; L-histidine from 5-phospho-alpha-D-ribose 1-diphosphate: step 2/9. It participates in amino-acid biosynthesis; L-histidine biosynthesis; L-histidine from 5-phospho-alpha-D-ribose 1-diphosphate: step 3/9. The polypeptide is Histidine biosynthesis bifunctional protein HisIE (Photorhabdus laumondii subsp. laumondii (strain DSM 15139 / CIP 105565 / TT01) (Photorhabdus luminescens subsp. laumondii)).